Consider the following 103-residue polypeptide: Small ribosomal subunit protein uS10c (103 aa).

This sequence belongs to the universal ribosomal protein uS10 family. In terms of assembly, part of the 30S ribosomal subunit.

Its subcellular location is the plastid. It is found in the chloroplast. In terms of biological role, involved in the binding of tRNA to the ribosomes. This is Small ribosomal subunit protein uS10c from Trieres chinensis (Marine centric diatom).